The sequence spans 238 residues: Sugar fermentation stimulation protein homolog (238 aa).

This sequence belongs to the SfsA family.

The protein is Sugar fermentation stimulation protein homolog of Bartonella tribocorum (strain CIP 105476 / IBS 506).